The primary structure comprises 374 residues: MKFELDTTDGRARRGRLIFDRGTVETPAFMPVGTYGTVKGMTPEEVRATGADILLGNTFHLWLRPGEEIMRKHGDLHDFMNWQRPILTDSGGFQVFSLGDIRKITEEGVHFRSPINGEKIFLDPEKSMQIQHALGSDVVMIFDECTPYPATEDEARKSMQMSLRWAKRSRDEFDRLENPNSLFGIIQGSVYEDLRDESLKGLVEIGFDGYAVGGLAVGEPKEDMHRILEHVCPQILADKPRYLMGVGKPEDLVEGVRRGIDMFDCVMPTRNARNGHLFTSEGVIKIRNARHRDDTSPLDPKCDCYTCKNYSRAYLYHLDRCNEILGARLNTIHNLRYYQMLMEGLRGAIETGTLDAFVKDFYTSQGREVPELVD.

D89 (proton acceptor) is an active-site residue. Residues 89 to 93 (DSGGF), D143, Q187, and G214 each bind substrate. Residues 245 to 251 (GVGKPED) form an RNA binding region. D264 functions as the Nucleophile in the catalytic mechanism. The interval 269-273 (TRNAR) is RNA binding; important for wobble base 34 recognition. Residues C302, C304, C307, and H333 each contribute to the Zn(2+) site.

This sequence belongs to the queuine tRNA-ribosyltransferase family. As to quaternary structure, homodimer. Within each dimer, one monomer is responsible for RNA recognition and catalysis, while the other monomer binds to the replacement base PreQ1. It depends on Zn(2+) as a cofactor.

The catalysed reaction is 7-aminomethyl-7-carbaguanine + guanosine(34) in tRNA = 7-aminomethyl-7-carbaguanosine(34) in tRNA + guanine. Its pathway is tRNA modification; tRNA-queuosine biosynthesis. In terms of biological role, catalyzes the base-exchange of a guanine (G) residue with the queuine precursor 7-aminomethyl-7-deazaguanine (PreQ1) at position 34 (anticodon wobble position) in tRNAs with GU(N) anticodons (tRNA-Asp, -Asn, -His and -Tyr). Catalysis occurs through a double-displacement mechanism. The nucleophile active site attacks the C1' of nucleotide 34 to detach the guanine base from the RNA, forming a covalent enzyme-RNA intermediate. The proton acceptor active site deprotonates the incoming PreQ1, allowing a nucleophilic attack on the C1' of the ribose to form the product. After dissociation, two additional enzymatic reactions on the tRNA convert PreQ1 to queuine (Q), resulting in the hypermodified nucleoside queuosine (7-(((4,5-cis-dihydroxy-2-cyclopenten-1-yl)amino)methyl)-7-deazaguanosine). The protein is Queuine tRNA-ribosyltransferase of Shewanella oneidensis (strain ATCC 700550 / JCM 31522 / CIP 106686 / LMG 19005 / NCIMB 14063 / MR-1).